A 417-amino-acid chain; its full sequence is Carbohydrate sulfotransferase 8 (417 aa).

The Cytoplasmic portion of the chain corresponds to 1-10 (MTPRLGTMRL). A helical; Signal-anchor for type II membrane protein membrane pass occupies residues 11–31 (ACMFSSILLFGAAGLLLFISL). Residues 32–417 (QDPIELSPQQ…NYSKPFSDLY (386 aa)) lie on the Lumenal side of the membrane. A disordered region spans residues 47 to 101 (FSIRPQQPQHDSHLRISTEKGTRDSPSGSPRGLQLQAPDQPRPHPKAAGSPLRLR). The span at 56 to 69 (HDSHLRISTEKGTR) shows a compositional bias: basic and acidic residues. N-linked (GlcNAc...) asparagine glycans are attached at residues Asn-121 and Asn-122. Residues 191–197 (PKAGCSN) and 251–259 (REPFERLVS) contribute to the 3'-phosphoadenylyl sulfate site. Residues Asn-287, Asn-360, and Asn-408 are each glycosylated (N-linked (GlcNAc...) asparagine).

This sequence belongs to the sulfotransferase 2 family. As to expression, strongly expressed in brain. Weakly expressed in lung and kidney. Weakly expressed in pituitary.

The protein localises to the golgi apparatus membrane. Functionally, catalyzes the transfer of sulfate to position 4 of non-reducing N-acetylgalactosamine (GalNAc) residues in both N-glycans and O-glycans. Required for biosynthesis of glycoprotein hormones lutropin and thyrotropin, by mediating sulfation of their carbohydrate structures. Only active against terminal GalNAcbeta1,GalNAcbeta. Not active toward chondroitin. The protein is Carbohydrate sulfotransferase 8 (Chst8) of Mus musculus (Mouse).